The primary structure comprises 410 residues: Cathepsin D (410 aa).

The signal sequence occupies residues 1-18; sequence MQPPSLLLLVLGLLAAPA. Residues 19–64 constitute a propeptide, activation peptide; the sequence is AALVRIPLHKFTSVRRTMTELGGPVEDLIAKGPISKYAQGAPAVTG. Residues 79–405 form the Peptidase A1 domain; sequence YYGEIGIGTP…DRDQNRVGLA (327 aa). 2 disulfide bridges follow: Cys91/Cys160 and Cys110/Cys117. The active site involves Asp97. Asn134 and Asn261 each carry an N-linked (GlcNAc...) asparagine glycan. A disulfide bridge connects residues Cys284 and Cys288. The active site involves Asp293. A disulfide bridge connects residues Cys327 and Cys364.

The protein belongs to the peptidase A1 family. As to quaternary structure, consists of a light chain and a heavy chain. Interacts with ADAM30; this leads to activation of CTSD. Interacts with GRN; stabilizes CTSD; increases its proteolytic activity. In terms of processing, N- and O-glycosylated. Undergoes proteolytic cleavage and activation by ADAM30.

It is found in the lysosome. The protein resides in the melanosome. It localises to the secreted. Its subcellular location is the extracellular space. It carries out the reaction Specificity similar to, but narrower than, that of pepsin A. Does not cleave the 4-Gln-|-His-5 bond in B chain of insulin.. In terms of biological role, acid protease active in intracellular protein breakdown. Plays a role in APP processing following cleavage and activation by ADAM30 which leads to APP degradation. The chain is Cathepsin D (CTSD) from Canis lupus familiaris (Dog).